The primary structure comprises 91 residues: Small ribosomal subunit protein bS20 (91 aa).

The protein belongs to the bacterial ribosomal protein bS20 family.

Its function is as follows. Binds directly to 16S ribosomal RNA. The sequence is that of Small ribosomal subunit protein bS20 from Mycoplasma mobile (strain ATCC 43663 / 163K / NCTC 11711) (Mesomycoplasma mobile).